We begin with the raw amino-acid sequence, 847 residues long: Capsid-associated protein AC83 (847 aa).

A signal peptide spans 1-19; it reads MMSGVMLLMLAIFLIIAFT. The segment at 148-197 adopts a C2HC BV-type zinc-finger fold; sequence CVPVPPCDNKSAGLYPMDERLLDTLVLNQHLDKDYSTNAHLYHPTFYLRC. N-linked (GlcNAc...) asparagine; by host glycosylation is found at asparagine 156 and asparagine 211. 2 cysteine pairs are disulfide-bonded: cysteine 208–cysteine 221 and cysteine 261–cysteine 274. Positions 224–282 constitute a Chitin-binding type-2 domain; it reads NELCENRPDGYILSYFPSNLLVNQFMQCVNGRHVVGECPANKIFDRNLMSCVEAHPCAF. N-linked (GlcNAc...) asparagine; by host glycosylation is found at asparagine 306, asparagine 337, asparagine 500, asparagine 592, asparagine 613, and asparagine 639. A disordered region spans residues 665-698; sequence DHWVVAPPTAPPPPPEPEPEPEPEPEPEPELPSP. Residues 681–693 show a composition bias toward acidic residues; it reads PEPEPEPEPEPEP.

It is found in the virion. In terms of biological role, plays an essential role in nucleocapsid assembly. Essential for the establishment of efficient per os infection. This Autographa californica nuclear polyhedrosis virus (AcMNPV) protein is Capsid-associated protein AC83 (p95).